Consider the following 774-residue polypeptide: Armadillo-like helical domain-containing protein 4 (774 aa).

The first 27 residues, 1–27 (MRGPIVLHICLAFCSLLLFSVATQCLA), serve as a signal peptide directing secretion. Topologically, residues 28 to 714 (FPKIERRREI…KDKAGYMSGM (687 aa)) are extracellular. Basic and acidic residues predominate over residues 41–52 (HAEKGQSDKMNT). Disordered regions lie at residues 41–63 (HAEKGQSDKMNTDDLENSSVTSK) and 97–135 (QPGQAGLMQTERPGVSTPTESGVPSAEEVFGSSQPERIS). A glycan (N-linked (GlcNAc...) asparagine) is linked at asparagine 57. Residue asparagine 189 is glycosylated (N-linked (GlcNAc...) asparagine). Residues 221–233 (KTEKFEADTDHRT) show a composition bias toward basic and acidic residues. 2 disordered regions span residues 221–275 (KTEK…QPLE) and 600–669 (ASYG…PGLE). The span at 258 to 275 (SQMTADNTQAAATKQPLE) shows a compositional bias: polar residues. Residues 607-651 (LESEEGQEDEDEEDEEDEDEEEEDEEEDEEDKDADSLDEGLDGDT) show a composition bias toward acidic residues. Residues 715–735 (LVPVGVGIAGALFILGALYSI) traverse the membrane as a helical segment. Residues 736–774 (KVMNRRRRNGFKRHKRKQREFNSMQDRVMLLADSSEDEF) lie on the Cytoplasmic side of the membrane. A phosphoserine mark is found at serine 769 and serine 770.

Interacts with IL6ST; this interaction prevents IL6ST protein homodimerization and bridges ARMH4 with IL6R and STAT3 and therefore inhibits phosphorylation of STAT3 at 'Tyr-705'. Interacts (via cytoplasmic tail) with RICTOR; this interaction bridges ARMH4 to the mTORC2 complex and inhibits the mTORC2 kinase activity. In terms of tissue distribution, expressed in podocytes.

It is found in the membrane. Its function is as follows. May modulate immune response and may play a role in inflammation. Down-modulates STAT3 signaling throught direct interaction with IL6ST, resulting in the inhibition of phosphorylation of STAT3 at 'Tyr-705'. May negatively regulates AKT signaling by modulating the activity of mTORC2 complex through RICTOR interaction. The chain is Armadillo-like helical domain-containing protein 4 from Homo sapiens (Human).